The following is a 315-amino-acid chain: Methionyl-tRNA formyltransferase (315 aa).

(6S)-5,6,7,8-tetrahydrofolate is bound at residue 113–116; that stretch reads SLLP.

This sequence belongs to the Fmt family.

It carries out the reaction L-methionyl-tRNA(fMet) + (6R)-10-formyltetrahydrofolate = N-formyl-L-methionyl-tRNA(fMet) + (6S)-5,6,7,8-tetrahydrofolate + H(+). In terms of biological role, attaches a formyl group to the free amino group of methionyl-tRNA(fMet). The formyl group appears to play a dual role in the initiator identity of N-formylmethionyl-tRNA by promoting its recognition by IF2 and preventing the misappropriation of this tRNA by the elongation apparatus. The protein is Methionyl-tRNA formyltransferase of Escherichia coli (strain SMS-3-5 / SECEC).